The sequence spans 311 residues: Cytosolic Fe-S cluster assembly factor Nubp1 homolog (311 aa).

Residues C9, C23, C26, and C32 each contribute to the [4Fe-4S] cluster site. 63-70 (GKGGVGKS) serves as a coordination point for ATP. [4Fe-4S] cluster contacts are provided by C240 and C243.

The protein belongs to the Mrp/NBP35 ATP-binding proteins family. NUBP1/NBP35 subfamily. Heterotetramer of 2 Nubp1 and 2 Nubp2 chains. [4Fe-4S] cluster serves as cofactor.

The protein resides in the cytoplasm. Component of the cytosolic iron-sulfur (Fe/S) protein assembly (CIA) machinery. Required for maturation of extramitochondrial Fe-S proteins. The Nubp1-Nubp2 heterotetramer forms a Fe-S scaffold complex, mediating the de novo assembly of an Fe-S cluster and its transfer to target apoproteins. The polypeptide is Cytosolic Fe-S cluster assembly factor Nubp1 homolog (Drosophila yakuba (Fruit fly)).